The sequence spans 599 residues: Proline dehydrogenase 1, mitochondrial (599 aa).

Disordered regions lie at residues 20 to 39 (STKP…LRGC) and 152 to 180 (EEAE…EKQY). Low complexity predominate over residues 23-39 (PQAQEQPPASPEALRGC). Positions 153–180 (EAERKEMESCTSEAERDGSGANKREKQY) are enriched in basic and acidic residues. N6-acetyllysine is present on residues lysine 356, lysine 367, and lysine 485.

It belongs to the proline oxidase family. It depends on FAD as a cofactor. As to expression, expressed in liver, kidney, heart and to a lesser extent in brain, lung and muscle.

The protein localises to the mitochondrion matrix. The catalysed reaction is L-proline + a quinone = (S)-1-pyrroline-5-carboxylate + a quinol + H(+). Its pathway is amino-acid degradation; L-proline degradation into L-glutamate; L-glutamate from L-proline: step 1/2. Functionally, converts proline to delta-1-pyrroline-5-carboxylate. The sequence is that of Proline dehydrogenase 1, mitochondrial (Prodh) from Mus musculus (Mouse).